Here is a 128-residue protein sequence, read N- to C-terminus: MRSEKHLLPLPPLLAICCLGTLHLSSGFPQSVPSYLEGLDIPESEIPSFVMDLCSSIYNRMKVNEENNHEIYKRFLFQFSRAKDPSLKIGESQIATAEYTKRDSSGIVGRPFFLFRPRNGRKVSINEH.

Residues 1 to 27 form the signal peptide; it reads MRSEKHLLPLPPLLAICCLGTLHLSSG. Propeptides lie at residues 28-72 and 75-100; these read FPQS…HEIY and FLFQ…AEYT. Asparagine 119 carries the asparagine amide modification. A propeptide spanning residues 123 to 128 is cleaved from the precursor; sequence VSINEH.

Belongs to the NmU family. As to expression, expressed by the skin glands.

Its subcellular location is the secreted. Neuromedin-S-17: stimulates uterine smooth muscle contraction (B similarity). Synthetic peptide NmS-17 induces calcium mobilization in CHO cells transfected with either human FM-3/GPR66 (EC(50)=0.085 nM) or FM-4/TGR-1 (EC(50)=0.231 nM) NmU/NmS receptors. This is Neuromedin-S (nms) from Bombina variegata (Yellow-bellied toad).